Reading from the N-terminus, the 132-residue chain is Small ribosomal subunit protein uS12 (132 aa).

Position 89 is a 3-methylthioaspartic acid (Asp89). Residues 102-132 (LDTSGVADRKQSRSKYGAKVPKAGAAPAKKK) are disordered. The segment covering 118–132 (GAKVPKAGAAPAKKK) has biased composition (low complexity).

It belongs to the universal ribosomal protein uS12 family. As to quaternary structure, part of the 30S ribosomal subunit. Contacts proteins S8 and S17. May interact with IF1 in the 30S initiation complex.

Functionally, with S4 and S5 plays an important role in translational accuracy. Interacts with and stabilizes bases of the 16S rRNA that are involved in tRNA selection in the A site and with the mRNA backbone. Located at the interface of the 30S and 50S subunits, it traverses the body of the 30S subunit contacting proteins on the other side and probably holding the rRNA structure together. The combined cluster of proteins S8, S12 and S17 appears to hold together the shoulder and platform of the 30S subunit. The protein is Small ribosomal subunit protein uS12 of Chlorobaculum tepidum (strain ATCC 49652 / DSM 12025 / NBRC 103806 / TLS) (Chlorobium tepidum).